A 172-amino-acid chain; its full sequence is 3-hydroxydecanoyl-[acyl-carrier-protein] dehydratase (172 aa).

Histidine 71 is a catalytic residue.

The protein belongs to the thioester dehydratase family. FabA subfamily. As to quaternary structure, homodimer.

The protein localises to the cytoplasm. It catalyses the reaction a (3R)-hydroxyacyl-[ACP] = a (2E)-enoyl-[ACP] + H2O. It carries out the reaction (3R)-hydroxydecanoyl-[ACP] = (2E)-decenoyl-[ACP] + H2O. The catalysed reaction is (2E)-decenoyl-[ACP] = (3Z)-decenoyl-[ACP]. It participates in lipid metabolism; fatty acid biosynthesis. In terms of biological role, necessary for the introduction of cis unsaturation into fatty acids. Catalyzes the dehydration of (3R)-3-hydroxydecanoyl-ACP to E-(2)-decenoyl-ACP and then its isomerization to Z-(3)-decenoyl-ACP. Can catalyze the dehydratase reaction for beta-hydroxyacyl-ACPs with saturated chain lengths up to 16:0, being most active on intermediate chain length. The sequence is that of 3-hydroxydecanoyl-[acyl-carrier-protein] dehydratase from Brucella ovis (strain ATCC 25840 / 63/290 / NCTC 10512).